The chain runs to 475 residues: ATP synthase subunit beta (475 aa).

154-161 is an ATP binding site; that stretch reads GGAGVGKT.

It belongs to the ATPase alpha/beta chains family. F-type ATPases have 2 components, CF(1) - the catalytic core - and CF(0) - the membrane proton channel. CF(1) has five subunits: alpha(3), beta(3), gamma(1), delta(1), epsilon(1). CF(0) has three main subunits: a(1), b(2) and c(9-12). The alpha and beta chains form an alternating ring which encloses part of the gamma chain. CF(1) is attached to CF(0) by a central stalk formed by the gamma and epsilon chains, while a peripheral stalk is formed by the delta and b chains.

The protein localises to the cell inner membrane. It catalyses the reaction ATP + H2O + 4 H(+)(in) = ADP + phosphate + 5 H(+)(out). Functionally, produces ATP from ADP in the presence of a proton gradient across the membrane. The catalytic sites are hosted primarily by the beta subunits. In Hyphomonas neptunium (strain ATCC 15444), this protein is ATP synthase subunit beta.